A 207-amino-acid chain; its full sequence is Ribosomal RNA small subunit methyltransferase G (207 aa).

Residues Gly-76, Gln-81, Val-127–Glu-128, and Arg-141 contribute to the S-adenosyl-L-methionine site.

Belongs to the methyltransferase superfamily. RNA methyltransferase RsmG family.

Its subcellular location is the cytoplasm. The enzyme catalyses guanosine(527) in 16S rRNA + S-adenosyl-L-methionine = N(7)-methylguanosine(527) in 16S rRNA + S-adenosyl-L-homocysteine. Functionally, specifically methylates the N7 position of guanine in position 527 of 16S rRNA. The sequence is that of Ribosomal RNA small subunit methyltransferase G from Neisseria meningitidis serogroup C / serotype 2a (strain ATCC 700532 / DSM 15464 / FAM18).